A 178-amino-acid polypeptide reads, in one-letter code: Redox-sensing transcriptional repressor Rex (178 aa).

59-64 serves as a coordination point for NAD(+); the sequence is GVGNMG.

The protein belongs to the transcriptional regulatory Rex family. Homodimer.

The protein resides in the cytoplasm. Functionally, modulates transcription in response to changes in cellular NADH/NAD(+) redox state. The polypeptide is Redox-sensing transcriptional repressor Rex (Streptococcus suis).